Reading from the N-terminus, the 340-residue chain is Glyceraldehyde-3-phosphate dehydrogenase (340 aa).

NAD(+) contacts are provided by residues Thr11 to Ile12 and Gly109. Ser138–Asn140 serves as a coordination point for D-glyceraldehyde 3-phosphate. The active-site Nucleophile is the Cys139. Arg167 contacts NAD(+). Residue His193–Ala194 participates in D-glyceraldehyde 3-phosphate binding. An NAD(+)-binding site is contributed by Gln300.

This sequence belongs to the glyceraldehyde-3-phosphate dehydrogenase family. Homotetramer.

It is found in the cytoplasm. The enzyme catalyses D-glyceraldehyde 3-phosphate + phosphate + NADP(+) = (2R)-3-phospho-glyceroyl phosphate + NADPH + H(+). The catalysed reaction is D-glyceraldehyde 3-phosphate + phosphate + NAD(+) = (2R)-3-phospho-glyceroyl phosphate + NADH + H(+). The protein operates within carbohydrate degradation; glycolysis; pyruvate from D-glyceraldehyde 3-phosphate: step 1/5. This Saccharolobus islandicus (strain L.S.2.15 / Lassen #1) (Sulfolobus islandicus) protein is Glyceraldehyde-3-phosphate dehydrogenase.